Here is a 712-residue protein sequence, read N- to C-terminus: Polyribonucleotide nucleotidyltransferase (712 aa).

Positions 487 and 493 each coordinate Mg(2+). Residues 554-613 (PRIEVMNIPVDKIREVIGSGGKVIREIVEKTGAKINIEDDGTVKIASSSGKEIEAARKWI) enclose the KH domain. The S1 motif domain occupies 623 to 691 (GQIYEGTVVK…ERGKVRLSMK (69 aa)).

This sequence belongs to the polyribonucleotide nucleotidyltransferase family. Mg(2+) serves as cofactor.

The protein localises to the cytoplasm. The enzyme catalyses RNA(n+1) + phosphate = RNA(n) + a ribonucleoside 5'-diphosphate. Functionally, involved in mRNA degradation. Catalyzes the phosphorolysis of single-stranded polyribonucleotides processively in the 3'- to 5'-direction. This chain is Polyribonucleotide nucleotidyltransferase, found in Rhizobium etli (strain CIAT 652).